A 332-amino-acid polypeptide reads, in one-letter code: MNVAINGFGRIGRLVLRASAKNPLINIVAINDPFVSTTYMEYMLEYDTVHGKFDGSLSHDETHIFVNGKPIRVFNEMNPENIKWGEEQVQYVVESTGAFTTLEKASTHLKNGVEKVVISAPSSDAPMFVMGVNHELYEKNMHVVSNASCTTNCLAPLAKVVNDKFGIKEGLMTTVHAVTATQKTVDGPSKKDWRGGRGACFNIIPSSTGAAKAVGKVIPSLNGKLTGMSFRVPTADVSVVDLTARLVNPASYDEIKAAIKSASENEMKGILGYTEKAVVSSDFIGDSHSSIFDAEAGIALTDDFVKLVSWYDNEWGYSSRVLDLIEHMVKNE.

NAD(+) is bound by residues 10–11 (RI), Asp32, and Met77. D-glyceraldehyde 3-phosphate contacts are provided by residues 148-150 (SCT), Thr179, 208-209 (TG), and Arg231. Cys149 functions as the Nucleophile in the catalytic mechanism. Asn313 contacts NAD(+).

It belongs to the glyceraldehyde-3-phosphate dehydrogenase family. As to quaternary structure, homotetramer.

Its subcellular location is the cytoplasm. The enzyme catalyses D-glyceraldehyde 3-phosphate + phosphate + NAD(+) = (2R)-3-phospho-glyceroyl phosphate + NADH + H(+). It functions in the pathway carbohydrate degradation; glycolysis; pyruvate from D-glyceraldehyde 3-phosphate: step 1/5. This is Glyceraldehyde-3-phosphate dehydrogenase (GPDA) from Phytophthora infestans (Potato late blight agent).